Reading from the N-terminus, the 391-residue chain is Cyclin-A1 (391 aa).

It belongs to the cyclin family. Cyclin AB subfamily. As to quaternary structure, interacts with the CDK1 and the CDK2 protein kinases to form a serine/threonine kinase holoenzyme complex. The cyclin subunit imparts substrate specificity to the complex.

The protein localises to the nucleus. Functionally, may be involved in the control of the cell cycle at the G1/S (start) and G2/M (mitosis) transitions. This Carassius auratus (Goldfish) protein is Cyclin-A1 (ccna1).